The sequence spans 199 residues: ATP synthase subunit b (199 aa).

A helical transmembrane segment spans residues 5–25 (SFVTTLSVCVMILGLAALGFA).

The protein belongs to the ATPase B chain family. F-type ATPases have 2 components, F(1) - the catalytic core - and F(0) - the membrane proton channel. F(1) has five subunits: alpha(3), beta(3), gamma(1), delta(1), epsilon(1). F(0) has three main subunits: a(1), b(2) and c(10-14). The alpha and beta chains form an alternating ring which encloses part of the gamma chain. F(1) is attached to F(0) by a central stalk formed by the gamma and epsilon chains, while a peripheral stalk is formed by the delta and b chains.

The protein localises to the cell inner membrane. Its function is as follows. F(1)F(0) ATP synthase produces ATP from ADP in the presence of a proton or sodium gradient. F-type ATPases consist of two structural domains, F(1) containing the extramembraneous catalytic core and F(0) containing the membrane proton channel, linked together by a central stalk and a peripheral stalk. During catalysis, ATP synthesis in the catalytic domain of F(1) is coupled via a rotary mechanism of the central stalk subunits to proton translocation. In terms of biological role, component of the F(0) channel, it forms part of the peripheral stalk, linking F(1) to F(0). In Citrifermentans bemidjiense (strain ATCC BAA-1014 / DSM 16622 / JCM 12645 / Bem) (Geobacter bemidjiensis), this protein is ATP synthase subunit b.